A 202-amino-acid chain; its full sequence is Superoxide dismutase [Fe] (202 aa).

Histidine 27, histidine 82, aspartate 164, and histidine 168 together coordinate Fe cation.

The protein belongs to the iron/manganese superoxide dismutase family. Homodimer. It depends on Fe cation as a cofactor.

The catalysed reaction is 2 superoxide + 2 H(+) = H2O2 + O2. Destroys superoxide anion radicals which are normally produced within the cells and which are toxic to biological systems. This Enterococcus faecalis (strain ATCC 700802 / V583) protein is Superoxide dismutase [Fe] (sodA).